A 292-amino-acid chain; its full sequence is Ribosomal RNA small subunit methyltransferase A (292 aa).

6 residues coordinate S-adenosyl-L-methionine: Asn-28, Leu-30, Gly-55, Glu-76, Asp-101, and Asn-126.

It belongs to the class I-like SAM-binding methyltransferase superfamily. rRNA adenine N(6)-methyltransferase family. RsmA subfamily.

The protein resides in the cytoplasm. It carries out the reaction adenosine(1518)/adenosine(1519) in 16S rRNA + 4 S-adenosyl-L-methionine = N(6)-dimethyladenosine(1518)/N(6)-dimethyladenosine(1519) in 16S rRNA + 4 S-adenosyl-L-homocysteine + 4 H(+). Its function is as follows. Specifically dimethylates two adjacent adenosines (A1518 and A1519) in the loop of a conserved hairpin near the 3'-end of 16S rRNA in the 30S particle. May play a critical role in biogenesis of 30S subunits. The sequence is that of Ribosomal RNA small subunit methyltransferase A from Bacillus mycoides (strain KBAB4) (Bacillus weihenstephanensis).